The following is a 624-amino-acid chain: DNA mismatch repair protein MutL (624 aa).

The tract at residues Glu355 to Leu377 is disordered. The span at Ala358–Pro368 shows a compositional bias: basic and acidic residues.

This sequence belongs to the DNA mismatch repair MutL/HexB family.

Functionally, this protein is involved in the repair of mismatches in DNA. It is required for dam-dependent methyl-directed DNA mismatch repair. May act as a 'molecular matchmaker', a protein that promotes the formation of a stable complex between two or more DNA-binding proteins in an ATP-dependent manner without itself being part of a final effector complex. This is DNA mismatch repair protein MutL from Bacillus velezensis (strain DSM 23117 / BGSC 10A6 / LMG 26770 / FZB42) (Bacillus amyloliquefaciens subsp. plantarum).